A 594-amino-acid polypeptide reads, in one-letter code: Pre-mRNA-processing protein 45 (594 aa).

Disordered regions lie at residues 36–63 (TTEY…RKGW), 223–254 (PPRF…TAQD), 370–426 (ETGI…SEMR), 498–523 (AGSS…SKDR), and 566–594 (EQFM…ARDE). Pro residues-rich tracts occupy residues 44-53 (APLPATPGPQ) and 235-244 (PAEPPPPVLQ). Residues 383-397 (GSEEESDEEEEDEEA) are compositionally biased toward acidic residues. 3 stretches are compositionally biased toward basic and acidic residues: residues 398–417 (IRER…KEMR), 513–523 (EGIKEEMSKDR), and 578–594 (RTAE…ARDE).

The protein belongs to the SNW family. As to quaternary structure, associated with the spliceosome.

The protein resides in the nucleus. In terms of biological role, involved in pre-mRNA splicing. The polypeptide is Pre-mRNA-processing protein 45 (PRP45) (Cryptococcus neoformans var. neoformans serotype D (strain B-3501A) (Filobasidiella neoformans)).